The chain runs to 658 residues: Heat shock protein homolog SSE1 (658 aa).

The segment covering Lys614–Ala627 has biased composition (basic and acidic residues). Residues Lys614–Glu658 form a disordered region. The segment covering Glu642 to Glu658 has biased composition (acidic residues).

It belongs to the heat shock protein 70 family.

It is found in the cytoplasm. In terms of biological role, required for normal growth at various temperatures. The protein is Heat shock protein homolog SSE1 (SSE1) of Encephalitozoon cuniculi (strain GB-M1) (Microsporidian parasite).